A 149-amino-acid chain; its full sequence is Nucleoside diphosphate kinase 1 (149 aa).

Residues Lys-9, Phe-57, Arg-85, Thr-91, Arg-102, and Asn-112 each contribute to the ATP site. Catalysis depends on His-115, which acts as the Pros-phosphohistidine intermediate.

This sequence belongs to the NDK family. Homohexamer. Can also form dodecamers. Mg(2+) serves as cofactor.

The protein localises to the nucleus. It catalyses the reaction a 2'-deoxyribonucleoside 5'-diphosphate + ATP = a 2'-deoxyribonucleoside 5'-triphosphate + ADP. The catalysed reaction is a ribonucleoside 5'-diphosphate + ATP = a ribonucleoside 5'-triphosphate + ADP. Functionally, major role in the synthesis of nucleoside triphosphates other than ATP. The ATP gamma phosphate is transferred to the NDP beta phosphate via a ping-pong mechanism, using a phosphorylated active-site intermediate. Involved in transcription regulation. Has G-quadruplex (G4) DNA-binding activity, which is independent of its nucleotide-binding and kinase activity. Binds folded G4 with low nanomolar affinity and corresponding unfolded G-rich DNA more weakly. Stabilizes folded G4s regardless of whether they are prefolded or not. The polypeptide is Nucleoside diphosphate kinase 1 (Zea mays (Maize)).